Reading from the N-terminus, the 658-residue chain is MSRIAALPDHLVNQIAAGEVVERPANALKEIVENSIDAGATAIDVELAGGGIRLIRVSDNGGGIHPDDIELALHRHATSKIKTLNDLEHVASMGFRGEGLASIASVSRLTLTSRQEDSSHATQVKAEDGKLSSPTAAAHPVGTTIEAAELFFNTPARRKFLKSEATEYAHCATMLERLALAHPHIAFSLKRDGKQVFKLPAQSLHERIAAIVGDDFQTASLEIDSDNGALRLYGAIAKPTFAKGKTDKQYCFVNHRFVRDKVMLHAVKQAYRDVLHNALTPAFVLFLDLPPEAVDVNVHPTKTEIRFRDSQQVHQLVFHTLNKALADTRADLTESVSNAGEVLHDITGVTPAPMPSENNSENLFDRASNYPTGNKSDTHNAFGSSGKTAPMPYQSAYAPQQRSLSLRESRAAMNTYAELYKKTDDIDLELSRFEQARFGNMPSETPAPQTDTPLSDGIPSPSELPPLGFAIAQLLGIYILAQAEDSLLLIDMHAAAERVNYEKMKRQRQENGNLQSQRLLIPVTFAASHEECAALADHAEALAGFGLELSDMGGNTLAVRAAPAMLGKSDVVSLARDVLNEFAQVGSSQTIEEHENHILATMSCHGSIRAGRRLTLPEMNALLRDMENTPRSNQCNHGRPTWVKLTLKELDALFLRGQ.

Over residues 114 to 130 (RQEDSSHATQVKAEDGK) the composition is skewed to basic and acidic residues. Residues 114–137 (RQEDSSHATQVKAEDGKLSSPTAA) form a disordered region.

This sequence belongs to the DNA mismatch repair MutL/HexB family.

In terms of biological role, this protein is involved in the repair of mismatches in DNA. It is required for dam-dependent methyl-directed DNA mismatch repair. May act as a 'molecular matchmaker', a protein that promotes the formation of a stable complex between two or more DNA-binding proteins in an ATP-dependent manner without itself being part of a final effector complex. This is DNA mismatch repair protein MutL from Neisseria meningitidis serogroup C / serotype 2a (strain ATCC 700532 / DSM 15464 / FAM18).